A 37-amino-acid polypeptide reads, in one-letter code: Potassium channel toxin alpha-KTx 11.1 (37 aa).

Cystine bridges form between Cys-8/Cys-27, Cys-13/Cys-33, and Cys-17/Cys-35.

This sequence belongs to the short scorpion toxin superfamily. Potassium channel inhibitor family. Alpha-KTx 11 subfamily. Expressed by the venom gland.

It localises to the secreted. In terms of biological role, binds and inhibits voltage-sensitive potassium channels. Inhibits the vertebrate potassium channels Kv1.1/KCNA1, Kv1.2/KCNA2 and Kv1.3/KCNA3 with low affinity. Also weakly inhibits Kv7.1/KCNQ1 (10 uM of the toxin inhibits currents by 21.43%). In Parabuthus villosus (Black hairy thick-tailed scorpion), this protein is Potassium channel toxin alpha-KTx 11.1.